A 308-amino-acid chain; its full sequence is GMP synthase [glutamine-hydrolyzing] subunit B (308 aa).

The 185-residue stretch at 1–185 (MDWGRFVEEK…LGLPEKIYNR (185 aa)) folds into the GMPS ATP-PPase domain. 28–34 (SGGVDSS) serves as a coordination point for ATP.

Heterodimer composed of a glutamine amidotransferase subunit (A) and a GMP-binding subunit (B).

The enzyme catalyses XMP + L-glutamine + ATP + H2O = GMP + L-glutamate + AMP + diphosphate + 2 H(+). The protein operates within purine metabolism; GMP biosynthesis; GMP from XMP (L-Gln route): step 1/1. Catalyzes the synthesis of GMP from XMP. In Pyrococcus horikoshii (strain ATCC 700860 / DSM 12428 / JCM 9974 / NBRC 100139 / OT-3), this protein is GMP synthase [glutamine-hydrolyzing] subunit B (guaAB).